Here is a 648-residue protein sequence, read N- to C-terminus: UDP-galactose:fucoside alpha-3-galactosyltransferase (648 aa).

WD repeat units lie at residues 320 to 358, 372 to 420, 422 to 461, 464 to 505, 507 to 546, 556 to 595, and 617 to 648; these read NHTDIITSINSSDDGKLFTTSIDKSIKIWKFENTSGNDT, HKRG…IQTF, GHTGIINQLIVIPNSSYFFTCSDDNTIRQFDLNNINFKRV, GHNG…NIIK, NQGGWIRKIIYNDNLNQLISGGNDGTIKIWSCDNLNNFND, NENSSINDLQFDSDTNLIYCAFENGSLKSFKLTSNNNNNN, and HLNSSINCIHISKSLNLLFSGGFDKQIKSWDL.

The protein belongs to the glycosyltransferase 77 family. Mn(2+) is required as a cofactor.

Its subcellular location is the cytoplasm. It catalyses the reaction an alpha-L-fucosyl-(1-&gt;2)-beta-D-galactosyl derivative + UDP-alpha-D-galactose = an alpha-D-galactosyl-(1-&gt;3)-[alpha-L-fucosyl-(1-&gt;2)]-beta-D-galactosyl derivative + UDP + H(+). It participates in protein modification; protein glycosylation. With respect to regulation, stimulated by dithiothreitol (DTT) in vitro. Totally inhibited by EDTA. Specifically catalyzes the transfer of a galactosyl residue to the hydroxyproline-linked saccharide on Skp1 protein (fpaA/fpaB). Catalyzes the formation of a Gal-alpha-1,3-Fuc linkage, leading to Gal-Fuc-Gal-GlcNAc-HyPro143-Skp1. In Dictyostelium discoideum (Social amoeba), this protein is UDP-galactose:fucoside alpha-3-galactosyltransferase (agtA).